Consider the following 237-residue polypeptide: Lysophospholipase-like protein 1 (237 aa).

Ala-2 carries the N-acetylalanine modification. Catalysis depends on charge relay system residues Ser-124, Asp-179, and His-211.

It belongs to the AB hydrolase superfamily. AB hydrolase 2 family.

Its subcellular location is the cytoplasm. It is found in the cytosol. The enzyme catalyses S-hexadecanoyl-L-cysteinyl-[protein] + H2O = L-cysteinyl-[protein] + hexadecanoate + H(+). Palmitoyl thioesterase that catalyzes depalmitoylation of CGAS and KCNMA1. Acts as a regulator of innate immunity by mediating depalmitoylation of CGAS, thereby preventing CGAS homodimerization and cyclic GMP-AMP synthase activity. Does not exhibit phospholipase nor triacylglycerol lipase activity, able to hydrolyze only short chain substrates due to its shallow active site. This Pongo abelii (Sumatran orangutan) protein is Lysophospholipase-like protein 1.